The following is an 84-amino-acid chain: Large ribosomal subunit protein uL29 (84 aa).

This sequence belongs to the universal ribosomal protein uL29 family.

The polypeptide is Large ribosomal subunit protein uL29 (Mycoplasma mobile (strain ATCC 43663 / 163K / NCTC 11711) (Mesomycoplasma mobile)).